The chain runs to 406 residues: Phosphoglycerate kinase (406 aa).

Residues 22–24, arginine 37, 60–63, arginine 119, and arginine 152 each bind substrate; these read DLN and HLGN. ATP contacts are provided by residues lysine 202, glutamate 325, and 355 to 358; that span reads GGDT.

It belongs to the phosphoglycerate kinase family. Monomer.

It localises to the cytoplasm. The enzyme catalyses (2R)-3-phosphoglycerate + ATP = (2R)-3-phospho-glyceroyl phosphate + ADP. The protein operates within carbohydrate degradation; glycolysis; pyruvate from D-glyceraldehyde 3-phosphate: step 2/5. This is Phosphoglycerate kinase from Orientia tsutsugamushi (strain Ikeda) (Rickettsia tsutsugamushi).